A 255-amino-acid chain; its full sequence is MVDPVAALCNYNVLEVIFSYLELDDLSHCSQVCKSWYHFLNDENSDVWRWHCLNKLPKESLKSDLLSSVSTYKTKLRAYFHAWSPNDCSRNVYIKPNGFTLHRNPVAQSTDAARGKIGFRHGRHTWEVIWEGPLGTVAVIGISTKEAALQCHGYVALLGSDDQSWGWNLVENHLLHNGDMQGSYPLLNNAPKYQVGERIRVILDCEDNTLSFEKNYEFLGVAFRGLPDKKLYPTVSAVYGNTEVSMVYLGTPLDG.

The 49-residue stretch at 3–51 folds into the F-box domain; it reads DPVAALCNYNVLEVIFSYLELDDLSHCSQVCKSWYHFLNDENSDVWRWH. The B30.2/SPRY domain occupies 61 to 253; it reads LKSDLLSSVS…VSMVYLGTPL (193 aa).

It belongs to the FBXO45/Fsn family. As to quaternary structure, component of an E3 ubiquitin ligase complex composed of hiw and Fsn.

It localises to the synapse. Its pathway is protein modification; protein ubiquitination. In terms of biological role, required in the presynaptic motoneuron to down-regulate the levels of wnd and restrain synaptic terminal growth at the neuromuscular junction (NMJ). This chain is F-box/SPRY domain-containing protein 1, found in Drosophila simulans (Fruit fly).